Here is a 365-residue protein sequence, read N- to C-terminus: D-alanine--D-alanine ligase (365 aa).

The 211-residue stretch at 135–345 (KLLLKSFNIP…YGSLVDKLIA (211 aa)) folds into the ATP-grasp domain. 168-223 (KQSLDYPVIVKPAMLGSSIGISIAYNETQIEKCIEEAFAYDLTVVIEKFMRAREIE) contributes to the ATP binding site. Positions 298, 312, and 314 each coordinate Mg(2+).

The protein belongs to the D-alanine--D-alanine ligase family. Requires Mg(2+) as cofactor. It depends on Mn(2+) as a cofactor.

It localises to the cytoplasm. The catalysed reaction is 2 D-alanine + ATP = D-alanyl-D-alanine + ADP + phosphate + H(+). It participates in cell wall biogenesis; peptidoglycan biosynthesis. Its function is as follows. Cell wall formation. The sequence is that of D-alanine--D-alanine ligase from Borrelia turicatae (strain 91E135).